Consider the following 99-residue polypeptide: MANTKSAKKKIKVIRRRTIENKIQKFKMKKAIKEVKKALLSGDIEKAKELYSKAAKLIDQTAAKGVIHKNNASRKKSRLMKLINKYAALSSPQPESKAQ.

This sequence belongs to the bacterial ribosomal protein bS20 family.

Its function is as follows. Binds directly to 16S ribosomal RNA. The chain is Small ribosomal subunit protein bS20 from Caldicellulosiruptor bescii (strain ATCC BAA-1888 / DSM 6725 / KCTC 15123 / Z-1320) (Anaerocellum thermophilum).